The chain runs to 336 residues: D-alanine--D-alanine ligase (336 aa).

The ATP-grasp domain occupies 124–330 (KMWFSALGVP…FTEYLIDVIG (207 aa)). 154–209 (AFDNWGSVFVKAASQGSSVGCYKVDVKANIANVLKDAFSYAPYVVVEQTIHARELE) contacts ATP. The Mg(2+) site is built by D284, E297, and N299.

Belongs to the D-alanine--D-alanine ligase family. Mg(2+) serves as cofactor. Mn(2+) is required as a cofactor.

It is found in the cytoplasm. The enzyme catalyses 2 D-alanine + ATP = D-alanyl-D-alanine + ADP + phosphate + H(+). It functions in the pathway cell wall biogenesis; peptidoglycan biosynthesis. Functionally, cell wall formation. The chain is D-alanine--D-alanine ligase from Shewanella frigidimarina (strain NCIMB 400).